The following is a 670-amino-acid chain: WD repeat-containing protein 48 homolog (670 aa).

WD repeat units lie at residues 13-52, 59-98, 101-140, 152-191, 194-233, 236-275, and 278-317; these read RHRN…SQEP, HHND…CMST, THRD…ALTA, GSKD…KIAK, GHTE…CIQT, VHSE…NSVL, and EERA…KLSN. The interval 321-348 is disordered; that stretch reads SSNSSINSGGGGDGTPVTNSASNATPAS. The span at 338–348 shows a compositional bias: low complexity; sequence TNSASNATPAS. The WD 8 repeat unit spans residues 359-398; the sequence is KGGAAIKKYHVLNDKRFMLTKDSEQNVAIYDVLKVKKVED. Residues 613 to 625 are compositionally biased toward gly residues; it reads GGGGGSSTGGGGN. Residues 613-645 are disordered; the sequence is GGGGGSSTGGGGNSNSSQNNSQSDANSEGSQVP. The segment covering 626–635 has biased composition (low complexity); the sequence is SNSSQNNSQS.

The protein belongs to the WD repeat WDR48 family. Catalytic component of the Usp12-46 deubiquitylase complex consisting of Usp12-46, Wdr20 and Uaf1; regulatory subunit that, together wtih Wdr20, stabilizes Usp12-46. The Usp12-46 deubiquitylase complex associates with arr/arrow; the interaction leads to deubiquitination and stabilization of arr/arrow.

Regulatory component of the Usp12-46 deubiquitylase complex. activates deubiquitination by increasing the catalytic turnover without increasing the affinity of deubiquitinating enzymes for the substrate. The complex deubiquitylates the wg/wingless-signaling receptor arr/arrow, which stabilizes the receptor and increases its concentration at the cell surface; this enhances the sensitivity of cells to wg/wingless-signal stimulation. This increases the amplitude and spatial range of the signaling response to the wg/wingless morphogen gradient, facilitating the precise concentration-dependent regulation of its target genes. Together with Wdr20 and Usp12-46 required for wg/wingless-mediated signaling in the wing imaginal disc and for wg/wingless-dependent regulation of intestinal stem cell proliferation. The sequence is that of WD repeat-containing protein 48 homolog from Culex quinquefasciatus (Southern house mosquito).